Consider the following 499-residue polypeptide: Cytochrome P450 71A27 (499 aa).

The chain crosses the membrane as a helical span at residues 3 to 23 (MILISLCLTTLLAFLFLKPLL). Position 438 (C438) interacts with heme.

It belongs to the cytochrome P450 family. Heme is required as a cofactor.

It is found in the membrane. In Arabidopsis thaliana (Mouse-ear cress), this protein is Cytochrome P450 71A27 (CYP71A27).